The following is a 37-amino-acid chain: Large ribosomal subunit protein bL36c (37 aa).

It belongs to the bacterial ribosomal protein bL36 family.

Its subcellular location is the plastid. The protein resides in the chloroplast. The polypeptide is Large ribosomal subunit protein bL36c (Oenothera argillicola (Appalachian evening primrose)).